The following is a 486-amino-acid chain: NADH-quinone oxidoreductase subunit N (486 aa).

The next 14 helical transmembrane spans lie at 8 to 28, 36 to 56, 74 to 94, 104 to 124, 125 to 145, 160 to 180, 204 to 224, 239 to 259, 270 to 290, 298 to 318, 329 to 349, 374 to 394, 407 to 427, and 459 to 479; these read LIAL…ILSI, FIAF…YFLI, ILYI…AYPW, EFYL…ISNH, MASL…LIAY, LVLS…IYAI, VLFG…MVPF, VLSF…LYFF, IFLI…LMAI, FFGY…LVSK, GIFL…INLF, ASIV…LGFF, HLWT…YGYL, and ILIF…NPLI.

It belongs to the complex I subunit 2 family. In terms of assembly, NDH-1 is composed of 13 different subunits. Subunits NuoA, H, J, K, L, M, N constitute the membrane sector of the complex.

The protein resides in the cell membrane. It carries out the reaction a quinone + NADH + 5 H(+)(in) = a quinol + NAD(+) + 4 H(+)(out). Its function is as follows. NDH-1 shuttles electrons from NADH, via FMN and iron-sulfur (Fe-S) centers, to quinones in the respiratory chain. The immediate electron acceptor for the enzyme in this species is believed to be ubiquinone. Couples the redox reaction to proton translocation (for every two electrons transferred, four hydrogen ions are translocated across the cytoplasmic membrane), and thus conserves the redox energy in a proton gradient. This is NADH-quinone oxidoreductase subunit N from Buchnera aphidicola subsp. Schizaphis graminum (strain Sg).